A 338-amino-acid chain; its full sequence is Anthranilate phosphoribosyltransferase (338 aa).

Residues glycine 81, 84-85 (GD), threonine 89, 91-94 (NIST), 109-117 (KHGNRNLSS), and alanine 121 each bind 5-phospho-alpha-D-ribose 1-diphosphate. Glycine 81 is a binding site for anthranilate. Position 93 (serine 93) interacts with Mg(2+). Asparagine 112 serves as a coordination point for anthranilate. Arginine 167 provides a ligand contact to anthranilate. Residues aspartate 226 and glutamate 227 each coordinate Mg(2+).

It belongs to the anthranilate phosphoribosyltransferase family. As to quaternary structure, homodimer. Mg(2+) is required as a cofactor.

It catalyses the reaction N-(5-phospho-beta-D-ribosyl)anthranilate + diphosphate = 5-phospho-alpha-D-ribose 1-diphosphate + anthranilate. It functions in the pathway amino-acid biosynthesis; L-tryptophan biosynthesis; L-tryptophan from chorismate: step 2/5. Catalyzes the transfer of the phosphoribosyl group of 5-phosphorylribose-1-pyrophosphate (PRPP) to anthranilate to yield N-(5'-phosphoribosyl)-anthranilate (PRA). The chain is Anthranilate phosphoribosyltransferase from Cereibacter sphaeroides (strain ATCC 17025 / ATH 2.4.3) (Rhodobacter sphaeroides).